Here is a 76-residue protein sequence, read N- to C-terminus: Small ribosomal subunit protein eS17 (76 aa).

This sequence belongs to the eukaryotic ribosomal protein eS17 family.

The sequence is that of Small ribosomal subunit protein eS17 from Picrophilus torridus (strain ATCC 700027 / DSM 9790 / JCM 10055 / NBRC 100828 / KAW 2/3).